The following is a 435-amino-acid chain: Serine--tRNA ligase (435 aa).

241-243 (TAE) is an L-serine binding site. Position 272 to 274 (272 to 274 (RAE)) interacts with ATP. E295 serves as a coordination point for L-serine. 359–362 (EISS) is an ATP binding site. Residue S395 coordinates L-serine.

Belongs to the class-II aminoacyl-tRNA synthetase family. Type-1 seryl-tRNA synthetase subfamily. Homodimer. The tRNA molecule binds across the dimer.

Its subcellular location is the cytoplasm. It catalyses the reaction tRNA(Ser) + L-serine + ATP = L-seryl-tRNA(Ser) + AMP + diphosphate + H(+). The catalysed reaction is tRNA(Sec) + L-serine + ATP = L-seryl-tRNA(Sec) + AMP + diphosphate + H(+). It participates in aminoacyl-tRNA biosynthesis; selenocysteinyl-tRNA(Sec) biosynthesis; L-seryl-tRNA(Sec) from L-serine and tRNA(Sec): step 1/1. Catalyzes the attachment of serine to tRNA(Ser). Is also able to aminoacylate tRNA(Sec) with serine, to form the misacylated tRNA L-seryl-tRNA(Sec), which will be further converted into selenocysteinyl-tRNA(Sec). The chain is Serine--tRNA ligase from Haemophilus ducreyi (strain 35000HP / ATCC 700724).